The primary structure comprises 715 residues: Fatty acid oxidation complex subunit alpha (715 aa).

An enoyl-CoA hydratase/isomerase region spans residues 1–190 (MIYEGKAITV…KVGAVDAVVA (190 aa)). Substrate is bound at residue D297. Residues 312-715 (HDVKQAAVLG…MAKNGQRFFN (404 aa)) form a 3-hydroxyacyl-CoA dehydrogenase region. NAD(+)-binding positions include M325, D344, 401–403 (VVE), K408, and S430. The active-site For 3-hydroxyacyl-CoA dehydrogenase activity is H451. N454 is a binding site for NAD(+). Substrate-binding residues include N501 and Y660.

This sequence in the N-terminal section; belongs to the enoyl-CoA hydratase/isomerase family. The protein in the C-terminal section; belongs to the 3-hydroxyacyl-CoA dehydrogenase family. In terms of assembly, heterotetramer of two alpha chains (FadB) and two beta chains (FadA).

The catalysed reaction is a (3S)-3-hydroxyacyl-CoA + NAD(+) = a 3-oxoacyl-CoA + NADH + H(+). The enzyme catalyses a (3S)-3-hydroxyacyl-CoA = a (2E)-enoyl-CoA + H2O. It catalyses the reaction a 4-saturated-(3S)-3-hydroxyacyl-CoA = a (3E)-enoyl-CoA + H2O. It carries out the reaction (3S)-3-hydroxybutanoyl-CoA = (3R)-3-hydroxybutanoyl-CoA. The catalysed reaction is a (3Z)-enoyl-CoA = a 4-saturated (2E)-enoyl-CoA. The enzyme catalyses a (3E)-enoyl-CoA = a 4-saturated (2E)-enoyl-CoA. It participates in lipid metabolism; fatty acid beta-oxidation. In terms of biological role, involved in the aerobic and anaerobic degradation of long-chain fatty acids via beta-oxidation cycle. Catalyzes the formation of 3-oxoacyl-CoA from enoyl-CoA via L-3-hydroxyacyl-CoA. It can also use D-3-hydroxyacyl-CoA and cis-3-enoyl-CoA as substrate. This chain is Fatty acid oxidation complex subunit alpha, found in Pseudomonas putida (strain ATCC 700007 / DSM 6899 / JCM 31910 / BCRC 17059 / LMG 24140 / F1).